Reading from the N-terminus, the 142-residue chain is Large ribosomal subunit protein uL13 (142 aa).

It belongs to the universal ribosomal protein uL13 family. Part of the 50S ribosomal subunit.

This protein is one of the early assembly proteins of the 50S ribosomal subunit, although it is not seen to bind rRNA by itself. It is important during the early stages of 50S assembly. The protein is Large ribosomal subunit protein uL13 of Azoarcus sp. (strain BH72).